A 108-amino-acid chain; its full sequence is Urease subunit beta (108 aa).

The protein belongs to the urease beta subunit family. In terms of assembly, probable heterotrimer of UreA (gamma), UreB (beta) and UreC (alpha) subunits. Three heterotrimers associate to form the active enzyme. The trimeric urease interacts with an accessory complex composed of UreD, UreF and UreG, which is required for the assembly of the nickel containing metallocenter of UreC. The UreE protein may also play a direct role in nickel transfer to the urease apoprotein.

It localises to the cytoplasm. It carries out the reaction urea + 2 H2O + H(+) = hydrogencarbonate + 2 NH4(+). Its pathway is nitrogen metabolism; urea degradation; CO(2) and NH(3) from urea (urease route): step 1/1. The polypeptide is Urease subunit beta (Proteus mirabilis (strain HI4320)).